A 284-amino-acid polypeptide reads, in one-letter code: 4-diphosphocytidyl-2-C-methyl-D-erythritol kinase (284 aa).

K14 is an active-site residue. An ATP-binding site is contributed by 98 to 108 (PMGGGLGGGSS). D140 is an active-site residue.

It belongs to the GHMP kinase family. IspE subfamily.

The catalysed reaction is 4-CDP-2-C-methyl-D-erythritol + ATP = 4-CDP-2-C-methyl-D-erythritol 2-phosphate + ADP + H(+). Its pathway is isoprenoid biosynthesis; isopentenyl diphosphate biosynthesis via DXP pathway; isopentenyl diphosphate from 1-deoxy-D-xylulose 5-phosphate: step 3/6. Its function is as follows. Catalyzes the phosphorylation of the position 2 hydroxy group of 4-diphosphocytidyl-2C-methyl-D-erythritol. In Shewanella sp. (strain W3-18-1), this protein is 4-diphosphocytidyl-2-C-methyl-D-erythritol kinase.